A 289-amino-acid chain; its full sequence is Nodulation protein NolT (289 aa).

A signal peptide spans 1–33; the sequence is MFGSAHGDTTSSDTSGRRPLRLVVLPLLLALSS. Cysteine 34 carries the N-palmitoyl cysteine lipid modification. Cysteine 34 carries the S-diacylglycerol cysteine lipid modification. The helical transmembrane segment at 233-253 threads the bilayer; sequence VAVGVSAAVFAVTCYLLFIVL.

This sequence belongs to the YscJ lipoprotein family.

The protein resides in the cell outer membrane. This chain is Nodulation protein NolT (nolT), found in Sinorhizobium fredii (strain NBRC 101917 / NGR234).